The sequence spans 398 residues: Flavohemoprotein (398 aa).

A Globin domain is found at 9 to 147 (QLTPAQIKII…LAKLLIDLEA (139 aa)). Heme b is bound at residue His-93. Residues Tyr-103 and Glu-146 each act as charge relay system in the active site. The reductase stretch occupies residues 155 to 398 (WRWFKDFKVT…KLEYFGPYDP (244 aa)). In terms of domain architecture, FAD-binding FR-type spans 156–263 (RWFKDFKVTR…APPAGNFVYD (108 aa)). Residues Tyr-196 and 212-215 (REYS) each bind FAD. Position 276–281 (276–281 (GIGITP)) interacts with NADP(+). 395-398 (PYDP) provides a ligand contact to FAD.

This sequence belongs to the globin family. The cofactor is FAD. It depends on heme b as a cofactor.

Its subcellular location is the cytoplasm. The catalysed reaction is 2 nitric oxide + NADPH + 2 O2 = 2 nitrate + NADP(+) + H(+). It catalyses the reaction 2 nitric oxide + NADH + 2 O2 = 2 nitrate + NAD(+) + H(+). Its activity is regulated as follows. Inhibited by imidazoles. Functionally, nitric oxide dioxygenase involved in NO detoxification in an aerobic process, termed nitric oxide dioxygenase (NOD) reaction that utilizes O(2) and NAD(P)H to convert NO to nitrate, which protects the fungus from various noxious nitrogen compounds. Therefore, plays a central role in the inducible response to nitrosative stress. Plays a role in virulence since nitric oxide is generated by macrophages of the host immune system. In Candida albicans (strain SC5314 / ATCC MYA-2876) (Yeast), this protein is Flavohemoprotein (YHB1).